A 40-amino-acid polypeptide reads, in one-letter code: Ribosome-inactivating protein saporin-1 (40 aa).

It belongs to the ribosome-inactivating protein family. Type 1 RIP subfamily.

It carries out the reaction Endohydrolysis of the N-glycosidic bond at one specific adenosine on the 28S rRNA.. Functionally, ribosome-inactivating protein of type 1, inhibits protein synthesis in animal cells. This chain is Ribosome-inactivating protein saporin-1 (SAP1), found in Saponaria officinalis (Common soapwort).